The following is a 532-amino-acid chain: IQ domain-containing protein IQM4 (532 aa).

Disordered regions lie at residues 47-67 (SRTN…TGME) and 85-104 (PMNK…RNSL). Basic and acidic residues predominate over residues 56–66 (NPQEKSPKTGM). Residues 85 to 94 (PMNKEDEEIV) show a composition bias toward acidic residues. The IQ domain occupies 136–165 (LDAAATTLQKVYKSYRTRRNLADCAVVVEE). Disordered regions lie at residues 410 to 443 (SSGY…KERE) and 487 to 513 (PRIS…PRVR). Residues 487 to 496 (PRISPGSTRF) show a composition bias toward polar residues. Residues 499 to 509 (PYGPIPSPRPS) show a composition bias toward pro residues.

In terms of tissue distribution, expressed in roots, cauline leaves and flowers, and at lower levels in rosette leaves, stems and siliques.

It localises to the cytoplasm. It is found in the nucleus. Its function is as follows. May be involved in biotic and abiotic stress responses. The chain is IQ domain-containing protein IQM4 from Arabidopsis thaliana (Mouse-ear cress).